Here is a 432-residue protein sequence, read N- to C-terminus: Transcobalamin-2 (432 aa).

An N-terminal signal peptide occupies residues 1-18 (MGHLGALLFLLGGLGALA). Cystine bridges form between Cys-21–Cys-270, Cys-116–Cys-312, and Cys-165–Cys-208. N-linked (GlcNAc...) asparagine glycosylation occurs at Asn-94. Cob(II)alamin is bound by residues Gln-104, 152 to 156 (TSYYQ), His-193, 193 to 197 (HVSVD), Asn-245, Ser-248, Gln-294, and 400 to 402 (WQV).

It belongs to the eukaryotic cobalamin transport proteins family. As to quaternary structure, interacts with CD320 (via LDL-receptor class A domains). Expressed in mammary gland, kidney, lymphatic nodes and liver.

It localises to the secreted. In terms of biological role, primary vitamin B12-binding and transport protein. Delivers cobalamin to cells. The polypeptide is Transcobalamin-2 (TCN2) (Bos taurus (Bovine)).